The sequence spans 151 residues: Large ribosomal subunit protein uL15 (151 aa).

The segment at 1 to 45 is disordered; that stretch reads MNLSSLKPVKGSTKTCKRVGRGQGSGCGGTSTRGHKGQKSRSGYS. The segment covering 21 to 31 has biased composition (gly residues); the sequence is RGQGSGCGGTS.

It belongs to the universal ribosomal protein uL15 family. Part of the 50S ribosomal subunit.

Binds to the 23S rRNA. In Azobacteroides pseudotrichonymphae genomovar. CFP2, this protein is Large ribosomal subunit protein uL15.